Consider the following 89-residue polypeptide: Large ribosomal subunit protein bL27 (89 aa).

The segment at 1 to 26 (MAQKKAGGSSRNGRDSVGQRRGVKRF) is disordered.

This sequence belongs to the bacterial ribosomal protein bL27 family.

This chain is Large ribosomal subunit protein bL27, found in Desulfovibrio desulfuricans (strain ATCC 27774 / DSM 6949 / MB).